The chain runs to 243 residues: I/6 autoantigen (243 aa).

One can recognise an EF-hand domain in the interval 110 to 145 (LSVEEVDALFNALDSDNRGYVSVDEFMDALYGEEGR). The disordered stretch occupies residues 166 to 243 (PSWRMRPTPK…PPKQKAGCGC (78 aa)). Over residues 176–196 (PTRKLRQKRKREQGQKRKQGQ) the composition is skewed to basic residues. 6 repeat units span residues 181-188 (RQKRKREQ), 189-196 (GQKRKQGQ), 197-204 (RQKQEQGQ), 205-212 (RQKREQGQ), 213-220 (RQKQEQGQ), and 221-228 (KRKRERGG). Residues 181 to 228 (RQKRKREQGQKRKQGQRQKQEQGQRQKREQGQRQKQEQGQKRKRERGG) form a 6 X 8 AA tandem repeats region. Over residues 198–220 (QKQEQGQRQKREQGQRQKQEQGQ) the composition is skewed to basic and acidic residues.

It localises to the cytoplasm. The protein localises to the cytoskeleton. In terms of biological role, microtubule-associated protein that may be involved in cross-linking microtubules. The sequence is that of I/6 autoantigen from Trypanosoma brucei brucei.